A 91-amino-acid chain; its full sequence is Large ribosomal subunit protein bL28 (91 aa).

Belongs to the bacterial ribosomal protein bL28 family.

The protein is Large ribosomal subunit protein bL28 of Protochlamydia amoebophila (strain UWE25).